We begin with the raw amino-acid sequence, 331 residues long: uncharacterized protein (331 aa).

2 disordered regions span residues 131–163 (ISHASDQKSRPKPTKPRASRKRAAIAQSKKKRS) and 190–209 (DEQKSRQSTSQPDKEIVQSS). Residues 140-162 (RPKPTKPRASRKRAAIAQSKKKR) are compositionally biased toward basic residues. Residues 195–209 (RQSTSQPDKEIVQSS) show a composition bias toward polar residues.

This is an uncharacterized protein from Caenorhabditis elegans.